Consider the following 362-residue polypeptide: Cobalt-precorrin-5B C(1)-methyltransferase (362 aa).

Belongs to the CbiD family.

It catalyses the reaction Co-precorrin-5B + S-adenosyl-L-methionine = Co-precorrin-6A + S-adenosyl-L-homocysteine. The protein operates within cofactor biosynthesis; adenosylcobalamin biosynthesis; cob(II)yrinate a,c-diamide from sirohydrochlorin (anaerobic route): step 6/10. Its function is as follows. Catalyzes the methylation of C-1 in cobalt-precorrin-5B to form cobalt-precorrin-6A. The protein is Cobalt-precorrin-5B C(1)-methyltransferase of Burkholderia thailandensis (strain ATCC 700388 / DSM 13276 / CCUG 48851 / CIP 106301 / E264).